The chain runs to 367 residues: DNA replication and repair protein RecF (367 aa).

An ATP-binding site is contributed by 30–37 (GANGSGKT).

The protein belongs to the RecF family.

The protein localises to the cytoplasm. Functionally, the RecF protein is involved in DNA metabolism; it is required for DNA replication and normal SOS inducibility. RecF binds preferentially to single-stranded, linear DNA. It also seems to bind ATP. This Pseudomonas fluorescens (strain ATCC BAA-477 / NRRL B-23932 / Pf-5) protein is DNA replication and repair protein RecF.